A 198-amino-acid chain; its full sequence is Superoxide dismutase [Mn], mitochondrial (198 aa).

His26 contacts Mn(2+). Tyr34 carries the 3'-nitrotyrosine modification. An N6-acetyllysine; alternate mark is found at Lys44 and Lys51. 2 positions are modified to N6-succinyllysine; alternate: Lys44 and Lys51. His74 contacts Mn(2+). An N6-acetyllysine modification is found at Lys90. N6-acetyllysine; alternate occurs at positions 98 and 106. 2 positions are modified to N6-succinyllysine; alternate: Lys98 and Lys106. Residues Asp159 and His163 each coordinate Mn(2+). Lys178 is subject to N6-acetyllysine.

Belongs to the iron/manganese superoxide dismutase family. Homotetramer. It depends on Mn(2+) as a cofactor. Nitrated under oxidative stress. Nitration coupled with oxidation inhibits the catalytic activity. Post-translationally, acetylation at Lys-98 decreases enzymatic activity. Deacetylated by SIRT3 upon exposure to ionizing radiations or after long fasting. In terms of processing, polyubiquitinated; leading to proteasomal degradation. Deubiquitinated by USP36 which increases protein stability.

Its subcellular location is the mitochondrion matrix. The enzyme catalyses 2 superoxide + 2 H(+) = H2O2 + O2. Its function is as follows. Destroys superoxide anion radicals which are normally produced within the cells and which are toxic to biological systems. The sequence is that of Superoxide dismutase [Mn], mitochondrial (SOD2) from Macaca fuscata fuscata (Japanese macaque).